Consider the following 467-residue polypeptide: Argininosuccinate lyase (467 aa).

The protein belongs to the lyase 1 family. Argininosuccinate lyase subfamily.

The protein resides in the cytoplasm. The enzyme catalyses 2-(N(omega)-L-arginino)succinate = fumarate + L-arginine. It participates in amino-acid biosynthesis; L-arginine biosynthesis; L-arginine from L-ornithine and carbamoyl phosphate: step 3/3. This Rhizobium johnstonii (strain DSM 114642 / LMG 32736 / 3841) (Rhizobium leguminosarum bv. viciae) protein is Argininosuccinate lyase.